Reading from the N-terminus, the 702-residue chain is MHWILALSLLLLLLLLVASPRLAWLKAGLLSLLLLLLSAWGLVDRLSGDGVNAATLYHLRADMDGAGVSDFSGYIAVFIGMVLLSLSPLVLLRVRRFRRPRGGGAVFGAFVVMLLVSVAVSPLYRDGKRLYYQLRPVDYATVVPEYQVPQQPLQKRKNIVWIYGESLERTYFDEATFPGLMPNLHQLATEAVDVRNLTSTEGSGWTIAGMVASMCGVPLTTAPGDENSMGRMGLFLPEARCLGDYLKDQGYRNHYVGGADASFAGKGSFLASHGFDVVHDVNYFHDKGVAPKHFSAWGVHDDVLLDDAWDSFQTLSRAGQPFMLTTLTMDTHHPAGHLPLACKNQRYESPLGDIGLLHAIKCSDRLIGRLVTRIRNSRYGRNTIIVIASDHLAMPNDLSDVLAKQKRENLLLFLGKDIPPQQVVTRAGSTLDSGATLLQLLEPGMRTLGFGRSLLANDAPPSASVAASRDSGKNYPRYLAYARTLWTGRSTRMLRVNGNGDVVVGVQQVRPPVLLEYDDNTNLKTVYLENTSRQFDRTHSDGTLAYVDRCTAFEDGSADGDWCALVVDRNQHMKLYRDPDLTRGIAVDAPLDVTPQAPRPRVRQPIMLTQAARKTEAGRYMLELYAKRRPTRAFWVEAVSSERKVVLAQQWVVPDASGRIRMPVGLEHAVEDLEIRAWLDYTEEVSVDDLALVKDTAVADRS.

3 helical membrane passes run tryptophan 3–leucine 25, glycine 73–arginine 95, and glycine 102–tyrosine 124.

Belongs to the OpgB family.

It is found in the cell inner membrane. The enzyme catalyses a phosphatidylglycerol + a membrane-derived-oligosaccharide D-glucose = a 1,2-diacyl-sn-glycerol + a membrane-derived-oligosaccharide 6-(glycerophospho)-D-glucose.. It participates in glycan metabolism; osmoregulated periplasmic glucan (OPG) biosynthesis. Its function is as follows. Transfers a phosphoglycerol residue from phosphatidylglycerol to the membrane-bound nascent glucan backbones. This chain is Phosphoglycerol transferase I, found in Xanthomonas campestris pv. campestris (strain ATCC 33913 / DSM 3586 / NCPPB 528 / LMG 568 / P 25).